The following is a 787-amino-acid chain: Lon protease (787 aa).

A Lon N-terminal domain is found at 12–210; sequence LPLIPLRGLA…LIYSILLEEI (199 aa). 362 to 369 contacts ATP; sequence GPPGTGKT. Residues 599–780 enclose the Lon proteolytic domain; it reads NPQIGLVNGL…DEVLEQALLK (182 aa). Active-site residues include Ser-686 and Lys-729.

It belongs to the peptidase S16 family. As to quaternary structure, homohexamer. Organized in a ring with a central cavity.

It is found in the cytoplasm. It catalyses the reaction Hydrolysis of proteins in presence of ATP.. Its function is as follows. ATP-dependent serine protease that mediates the selective degradation of mutant and abnormal proteins as well as certain short-lived regulatory proteins. Required for cellular homeostasis and for survival from DNA damage and developmental changes induced by stress. Degrades polypeptides processively to yield small peptide fragments that are 5 to 10 amino acids long. Binds to DNA in a double-stranded, site-specific manner. This chain is Lon protease, found in Clostridioides difficile (strain 630) (Peptoclostridium difficile).